We begin with the raw amino-acid sequence, 281 residues long: Small ribosomal subunit protein uS2 (281 aa).

The disordered stretch occupies residues 225 to 281 (LMERKAEKPEEEETEEAAPRRERRARSGARRSRQNENEATAEAATEVAEAPEAEEAE). Over residues 245–256 (RERRARSGARRS) the composition is skewed to basic residues. Low complexity predominate over residues 262 to 272 (EATAEAATEVA).

This sequence belongs to the universal ribosomal protein uS2 family.

This Porphyromonas gingivalis (strain ATCC 33277 / DSM 20709 / CIP 103683 / JCM 12257 / NCTC 11834 / 2561) protein is Small ribosomal subunit protein uS2.